We begin with the raw amino-acid sequence, 249 residues long: Formylaminopyrimidine import ATP-binding protein ThiZ (249 aa).

The ABC transporter domain maps to 6 to 228; the sequence is LTFEEVSFAY…RRKMETTEKM (223 aa). Position 39 to 46 (39 to 46) interacts with ATP; sequence AKSGSGKS.

Belongs to the ABC transporter superfamily. In terms of assembly, the complex is likely composed of an ATP-binding protein (ThiZ), a transmembrane protein (ThiX) and a solute-binding protein (ThiY).

Its subcellular location is the cell membrane. The protein operates within cofactor biosynthesis; thiamine diphosphate biosynthesis. In terms of biological role, participates in a thiamine pyrimidine salvage pathway as part of the ABC transporter complex ThiXYZ involved in the import of thiamine degradation products such as the formylaminopyrimidine N-formyl-4-amino-5-aminomethyl-2-methylpyrimidine (FAMP). Is likely responsible for energy coupling to the transport system. This Halalkalibacterium halodurans (strain ATCC BAA-125 / DSM 18197 / FERM 7344 / JCM 9153 / C-125) (Bacillus halodurans) protein is Formylaminopyrimidine import ATP-binding protein ThiZ.